A 515-amino-acid chain; its full sequence is Signal transduction histidine-protein kinase/phosphatase MprB (515 aa).

Topologically, residues 1-24 are cytoplasmic; sequence MTLPPPPSRLKPPRNTSSLSLRWR. A helical transmembrane segment spans residues 25 to 45; sequence VMLLAMSMVAMVVVLMSVAVY. Topologically, residues 46-165 are extracellular; it reads AVVSRALYDD…TGQVLGRLGT (120 aa). The chain crosses the membrane as a helical span at residues 166–186; sequence VLLIVGGVGVAVAAIAGGMVA. The region spanning 187–239 is the HAMP domain; that stretch reads RAGLRPVGRLTQAAERVARTDDLRPIPVFGSDELARLTEAFNMMLRALTESRE. At 187–515 the chain is on the cytoplasmic side; that stretch reads RAGLRPVGRL…GKSRSASKEL (329 aa). The region spanning 247 to 467 is the Histidine kinase domain; the sequence is DAGHELRTPL…SFYVMLPGRP (221 aa). Residue His-250 is modified to Phosphohistidine; by autocatalysis. Residues 468 to 515 are disordered; that stretch reads LTPGGNGTAPVPAAQFDPDMRSAGSRADRRVIKNTETNGKSRSASKEL.

Requires Mg(2+) as cofactor. The cofactor is Mn(2+). In terms of processing, autophosphorylated.

The protein localises to the cell membrane. It catalyses the reaction ATP + protein L-histidine = ADP + protein N-phospho-L-histidine.. Its function is as follows. Member of the two-component regulatory system MprB/MprA which contributes to maintaining a balance among several systems involved in stress resistance and is required for establishment and maintenance of persistent infection in the host. In response to environmental signals MprB acts both as a membrane-associated protein kinase that undergoes autophosphorylation and subsequently transfers the phosphate to MprA, and a protein phosphatase that dephosphorylates phospho-MprA. This Mycobacterium sp. (strain KMS) protein is Signal transduction histidine-protein kinase/phosphatase MprB (mprB).